A 277-amino-acid polypeptide reads, in one-letter code: tRNA uridine(34) hydroxylase (277 aa).

The Rhodanese domain maps to 126 to 221; sequence SSPDVHVIDT…YLETVRGDDS (96 aa). The Cysteine persulfide intermediate role is filled by Cys-181.

The protein belongs to the TrhO family.

The catalysed reaction is uridine(34) in tRNA + AH2 + O2 = 5-hydroxyuridine(34) in tRNA + A + H2O. Catalyzes oxygen-dependent 5-hydroxyuridine (ho5U) modification at position 34 in tRNAs. The sequence is that of tRNA uridine(34) hydroxylase from Anaplasma marginale (strain Florida).